A 351-amino-acid polypeptide reads, in one-letter code: MAAAPDRQKALDAALAQIDKQFGKGSVMRLGDEVRAPIEVIPTGSIALDVALGIGGLPRGRVVEIYGPESSGKTTVALHAVANAQRQGGIAAFIDAEHALDPEYAAKLGVDTDALLVSQPDTGEQALEIMDMLIGSGSLDVIVIDSVAALVPRAEIEGDMGDSHVGLQARLMSQALRKITGRLSQTKTTAIFINQLREKIGVFFGSPETTTGGKALKFYASIRIDVRRIQTLKEGADSVGNRTKAKIVKNKMAPPFKIAEFDIIYGQGISREGGIIDMGVEHGLIKKSGSWFTYDGDQLGQGMENSRRFLRDNPELAAELERLIKEKLGVGVKPAEAEKEASPKLKAVDGF.

Residue 67-74 (GPESSGKT) coordinates ATP.

The protein belongs to the RecA family.

Its subcellular location is the cytoplasm. Its function is as follows. Can catalyze the hydrolysis of ATP in the presence of single-stranded DNA, the ATP-dependent uptake of single-stranded DNA by duplex DNA, and the ATP-dependent hybridization of homologous single-stranded DNAs. It interacts with LexA causing its activation and leading to its autocatalytic cleavage. This chain is Protein RecA, found in Arthrobacter sp. (strain FB24).